Reading from the N-terminus, the 23-residue chain is Phallacidin proprotein 1 (23 aa).

A propeptide is located at residue proline 1. The segment at residues 2-8 is a cross-link (cyclopeptide (Ala-Pro)); sequence AWLVDCP. The segment at residues 3–7 is a cross-link (2'-cysteinyl-6'-hydroxytryptophan sulfoxide (Trp-Cys)); it reads WLVDC. A propeptide spanning residues 9-23 is cleaved from the precursor; that stretch reads CVGDDINRLLTRGEK.

Belongs to the MSDIN fungal toxin family. Processed by the macrocyclase-peptidase enzyme POPB to yield a toxic cyclic heptapeptide. POPB first removes 10 residues from the N-terminus. Conformational trapping of the remaining peptide forces the enzyme to release this intermediate rather than proceed to macrocyclization. The enzyme rebinds the remaining peptide in a different conformation and catalyzes macrocyclization of the N-terminal 7 residues.

In terms of biological role, major toxin that belongs to the bicyclic heptapeptides called phallotoxins. Although structurally related to amatoxins, phallotoxins have a different mode of action, which is the stabilization of F-actin. Phallotoxins are poisonous when administered parenterally, but not orally because of poor absorption. This is Phallacidin proprotein 1 from Amanita phalloides (Death cap).